A 418-amino-acid chain; its full sequence is Glutamyl-tRNA reductase (418 aa).

Substrate-binding positions include 49–52, Ser108, 113–115, and Gln119; these read TCNR and EPQ. Cys50 functions as the Nucleophile in the catalytic mechanism. NADP(+) is bound at residue 188–193; that stretch reads GAGETI.

It belongs to the glutamyl-tRNA reductase family. In terms of assembly, homodimer.

The enzyme catalyses (S)-4-amino-5-oxopentanoate + tRNA(Glu) + NADP(+) = L-glutamyl-tRNA(Glu) + NADPH + H(+). It participates in porphyrin-containing compound metabolism; protoporphyrin-IX biosynthesis; 5-aminolevulinate from L-glutamyl-tRNA(Glu): step 1/2. Functionally, catalyzes the NADPH-dependent reduction of glutamyl-tRNA(Glu) to glutamate 1-semialdehyde (GSA). This is Glutamyl-tRNA reductase from Aliivibrio fischeri (strain ATCC 700601 / ES114) (Vibrio fischeri).